We begin with the raw amino-acid sequence, 168 residues long: MGYWKSKVVPRMKKLFEKSPAKKEVVEEEKPREVEVVEEVVVKTEEPAKEGETKPEEIIATGEKEIEIVEEKKEEAKPVEVPVLAAAEEKKPAVEEEKKTAPVEEKKPAVEEEKKPAVEEKKPVEEEKKEVVAAVPVAETPSTKAPETPVVETPAKAPETPAAAPQKA.

Gly-2 carries the N-myristoyl glycine lipid modification. Tandem repeats lie at residues 26 to 30 (VEEEK), 69 to 73 (VEEKK), 94 to 99 (VEEEKK), 103 to 107 (VEEKK), 110 to 115 (VEEEKK), 118 to 122 (VEEKK), and 124 to 129 (VEEEKK). A 7 X 5 AA approximate repeats of V-E-E-K-K region spans residues 26–129 (VEEEKPREVE…EKKPVEEEKK (104 aa)). A coiled-coil region spans residues 56–77 (EEIIATGEKEIEIVEEKKEEAK). The segment covering 88-131 (EEKKPAVEEEKKTAPVEEKKPAVEEEKKPAVEEKKPVEEEKKEV) has biased composition (basic and acidic residues). The tract at residues 88–168 (EEKKPAVEEE…ETPAAAPQKA (81 aa)) is disordered. The span at 152–168 (ETPAKAPETPAAAPQKA) shows a compositional bias: low complexity.

It belongs to the DREPP family. Binds microtubules. Interacts with calcium ion Ca(2+), calmodulin and some phosphatidylinositol phosphates (PtdInsPs) such as phosphatidylinositol 3,5-bisphosphate [PtdIns(3,5)P(2)], PtdIns(4,5)P(2) and PtdIns(3,4,5)P(3). It depends on Cu(2+) as a cofactor. Mostly expressed in the expanding cells, specifically in roots (except in root tips) and flowers (at protein level). Also detected in cotyledons, hypocotyls and trichome stalks.

It is found in the cell membrane. Its subcellular location is the cytoplasm. The protein resides in the cytoskeleton. Its function is as follows. May be involved in intracellular signaling through interaction with PtdInsPs and calmodulin (CaM); may keep PtdInsPs attached to the plasma membrane until Ca(2+)-CaM reaches a competitive concentration subsequent to an increase triggered by a stimulus, thus leading to PtdInsPs release and subsequent activation of InsPs-dependent signaling cascade. Binds to microtubules and inhibits tubulin polymerization. Regulates directional cell growth and cortical microtubule organization by destabilizing microtubules (e.g. in cotyledon pavement cells). This chain is Plasma membrane-associated cation-binding protein 2, found in Arabidopsis thaliana (Mouse-ear cress).